The following is a 575-amino-acid chain: Jasmonoyl--L-amino acid synthetase JAR1 (575 aa).

Positions methionine 10–glutamine 30 form a coiled coil. Residue serine 98 coordinates ATP. Serine 101 contributes to the jasmonate binding site. Residues methionine 118, threonine 121, glycine 163, asparagine 168, and glycine 331–tryptophan 336 contribute to the ATP site. Threonine 166–tyrosine 170 is an an L-alpha-amino acid binding site. Histidine 328–glycine 331 serves as a coordination point for jasmonate. Lysine 530–histidine 534 serves as a coordination point for an L-alpha-amino acid. Lysine 557 lines the ATP pocket.

The protein belongs to the IAA-amido conjugating enzyme family. As to quaternary structure, interacts with GSTU20/FIP1 under continuous far red (cFR) light; this binding increases its activity and determines the priority of substrate binding.

The protein resides in the cytoplasm. The catalysed reaction is a jasmonate + an L-alpha-amino acid + ATP = a jasmonyl-L-amino acid + AMP + diphosphate + H(+). It catalyses the reaction (+)-7-isojasmonate + L-isoleucine + ATP = L-isoleucine-(+)-7-isojasmonate + AMP + diphosphate + H(+). Its activity is regulated as follows. Activated by GSTU20/FIP1. Catalyzes the synthesis of jasmonates-amino acid conjugates by adenylation; can use Ile and, in vitro at least, Val, Leu and Phe as conjugating amino acids on jasmonic acid (JA) and 9,10-dihydro-JA substrates, and to a lower extent, on 3-oxo-2-(2Z-pentenyl)-cyclopentane-1-butyric acid (OPC-4) and 12-hydroxy-JA (12-OH-JA). Can synthesize adenosine 5-tetraphosphate in vitro. Required for the JA-mediated signaling pathway that regulates many developmental and defense mechanisms, including growth root inhibition, vegetative storage proteins (VSPs) accumulation, induced systemic resistance (ISR), response to wounding and herbivores, tolerance to ozone O(3) (probably having a role in lesion containment). Plays an important role in the accumulation of JA-Ile in response to wounding, both locally and systemically; promotes JA responding genes especially in distal part of wounded plants, via the JA-Ile-stimulated degradation of JAZ repressor proteins by the SCF(COI)E3 ubiquitin-protein ligase pathway. Involved in the apoptosis-like programmed cell death (PCD) induced by fungal toxin fumonisin B1-mediated (FB1). Required for volatile compounds (C6-aldehydes and allo-ocimene)-mediated defense activation. Involved in the non-pathogenic rhizobacterium-mediated ISR (defense priming) by P.fluorescens (strains CHAOr and WCS417r) and P.putida LSW17S against infection leaf pathogens such as P.syringae pv. tomato and H.parasitica. Required for the JA-dependent resistance to fungi such as P.irregulare, U.vignae and U.appendiculatus. Necessary to induce systemic resistance against R.solanaceraum and P.syringae pv. tomato with P.oligandrum (a non-pathogenic biocontrol agent) cell wall protein fraction (CWP). Mediates PGIP2 accumulation in response to B.cinerea infection and thus contributes to resistance against this pathogen. Modulates the UV-B alteration of leaves attractiveness to diamondback moths P.xylostella leading to insect oviposition. Involved in the regulation of far-red light influence on development, being an actor of the interplay between light and JA signaling. Seems necessary for the salicylic acid (SA)-mediated, NPR1-independent resistance pathway. May contribute to the chitin-elicited pathway. Contributes to the sensitivity toward F.graminearum. The protein is Jasmonoyl--L-amino acid synthetase JAR1 of Arabidopsis thaliana (Mouse-ear cress).